The following is a 430-amino-acid chain: Glutamate-1-semialdehyde 2,1-aminomutase (430 aa).

The residue at position 269 (lysine 269) is an N6-(pyridoxal phosphate)lysine.

This sequence belongs to the class-III pyridoxal-phosphate-dependent aminotransferase family. HemL subfamily. Homodimer. Pyridoxal 5'-phosphate is required as a cofactor.

The protein resides in the cytoplasm. The enzyme catalyses (S)-4-amino-5-oxopentanoate = 5-aminolevulinate. It functions in the pathway porphyrin-containing compound metabolism; protoporphyrin-IX biosynthesis; 5-aminolevulinate from L-glutamyl-tRNA(Glu): step 2/2. In Desulfitobacterium hafniense (strain Y51), this protein is Glutamate-1-semialdehyde 2,1-aminomutase.